Reading from the N-terminus, the 168-residue chain is Transcription antitermination protein NusB (168 aa).

Positions 147 to 168 (RGLINNSSRNTSRSEEKHSTEK) are disordered. The segment covering 158 to 168 (SRSEEKHSTEK) has biased composition (basic and acidic residues).

This sequence belongs to the NusB family.

In terms of biological role, involved in transcription antitermination. Required for transcription of ribosomal RNA (rRNA) genes. Binds specifically to the boxA antiterminator sequence of the ribosomal RNA (rrn) operons. This Chlorobium phaeobacteroides (strain BS1) protein is Transcription antitermination protein NusB.